The sequence spans 139 residues: CLAVATA3/ESR (CLE)-related protein 1 (139 aa).

Positions 1 to 22 (MPNIFKILLIVLLAVVSFRLSA) are cleaved as a signal peptide. The required for secretion from the host cytoplasm to the host apoplasm stretch occupies residues 23–90 (STGDKKTAND…VPSHLTNRSM (68 aa)). N-linked (GlcNAc...) asparagine glycans are attached at residues Asn37 and Asn87. A disordered region spans residues 66–139 (AIGRSNAQGG…SPSGPDPHHH (74 aa)). The stretch at 100-125 (EKGAATRVEKMRAQLRELAEKMTDKD) forms a coiled coil. Positions 106 to 128 (RVEKMRAQLRELAEKMTDKDPKR) are enriched in basic and acidic residues. Positions 128 to 139 (RLSPSGPDPHHH) match the CLE motif.

The protein belongs to the CLV3/ESR signal peptide family. In terms of tissue distribution, highly expressed exclusively within the dorsal esophageal gland cell during syncytium formation in host plants (at protein level).

The protein localises to the secreted. Its subcellular location is the host cytoplasm. It is found in the host extracellular space. It localises to the extracellular space. The protein resides in the apoplast. Functionally, mimics host plant CLE extracellular signal peptides that regulate cell fate. May play a role in the differentiation or division of feeding cells (syncytia) induced in plant roots during infection. The chain is CLAVATA3/ESR (CLE)-related protein 1 (CLE1) from Heterodera glycines (Soybean cyst nematode worm).